The following is a 128-amino-acid chain: Lymphocyte antigen 6 complex locus protein G5c (128 aa).

The N-terminal stretch at 1–29 is a signal peptide; that stretch reads MGAEYGCLPSTSQALYVILLIVLVRMSLV. The 92-residue stretch at 37 to 128 folds into the UPAR/Ly6 domain; sequence LRCYRCLLET…NPQNRVFYIP (92 aa). Intrachain disulfides connect Cys-39-Cys-66, Cys-42-Cys-51, Cys-58-Cys-85, Cys-94-Cys-111, and Cys-112-Cys-117. Asn-73 carries N-linked (GlcNAc...) asparagine glycosylation.

As to quaternary structure, forms oligomers. In terms of processing, N-glycosylated. As to expression, abundantly expressed in the epididymis.

Its subcellular location is the secreted. Functionally, may have a role in hematopoietic cell differentiation. This chain is Lymphocyte antigen 6 complex locus protein G5c (LY6G5C), found in Canis lupus familiaris (Dog).